The following is a 434-amino-acid chain: MSRLSKEEISERLLELIKDETKPAIGCTEPVAVAFTVATGKKYMAGEVLKIDLKVSKNILKNGKSVTIPNTEVCGLDIAGALGGICGDPEEGLFVFKNVNKDYLDKAREMIKNKVVTLNPIENTDPVFVEATLKGEKDEVIAILEGGHTNIERIIVNGKIAFEKDNKNEKDNKDCDFMKELSLKDIREITEDISIEKLGFIMDGIEMNKEAAKEGLKRQKGLTLGSSLLKLQQEGKLGKDSATIARILTAAGSDLRMGGGMCPIMTSGGSGNQGLCVILPITVVAEDIKAPKEKLQRAVFFGHAVNNFVKKYTGKLSAICGCAIAAGIGATAGIAWLLGGKDKEINGAILNMLANLTGMVCDGAKGSCAIKLSTSASEAVISAYLALNDIIVPNNTGIIGNTVEDTINNLGMLCKDGFYKADDVMLSIACKEVI.

Belongs to the UPF0597 family.

The sequence is that of UPF0597 protein CLI_2075 from Clostridium botulinum (strain Langeland / NCTC 10281 / Type F).